Reading from the N-terminus, the 152-residue chain is MMKKIDVKIVDPRVGQQFPLPTYATPGSAGLDLRACLDQAIELKAGETTLIPTGLAIHIADTGLAAVILPRSGLGHKHGVVLGNLVGLIDSDYQGQLMVSVWNRGQQTFTVEPGERIAQMVFVPVVQAEFNLVEDFVSSERGEGGFGHSGRS.

Substrate is bound by residues 71 to 73 (RSG), N84, 88 to 90 (LID), and M98.

This sequence belongs to the dUTPase family. It depends on Mg(2+) as a cofactor.

The enzyme catalyses dUTP + H2O = dUMP + diphosphate + H(+). The protein operates within pyrimidine metabolism; dUMP biosynthesis; dUMP from dCTP (dUTP route): step 2/2. In terms of biological role, this enzyme is involved in nucleotide metabolism: it produces dUMP, the immediate precursor of thymidine nucleotides and it decreases the intracellular concentration of dUTP so that uracil cannot be incorporated into DNA. The polypeptide is Deoxyuridine 5'-triphosphate nucleotidohydrolase (Pectobacterium carotovorum subsp. carotovorum (strain PC1)).